Reading from the N-terminus, the 196-residue chain is uncharacterized protein (196 aa).

An N-terminal signal peptide occupies residues Met-1 to Ala-23. N-linked (GlcNAc...) asparagine glycosylation is found at Asn-19 and Asn-26. Residues Ser-24–Thr-60 are Extracellular-facing. Residues Leu-61–Phe-81 traverse the membrane as a helical segment. Residues His-82 to Ser-196 lie on the Cytoplasmic side of the membrane. The disordered stretch occupies residues Met-93–Thr-184. Basic and acidic residues-rich tracts occupy residues Arg-95–Ser-106 and His-124–Arg-135. Residues Cys-161–Ser-171 are compositionally biased toward pro residues. A compositionally biased stretch (low complexity) spans Pro-172 to Cys-181.

Its subcellular location is the membrane. This is an uncharacterized protein from Rattus norvegicus (Rat).